Here is a 470-residue protein sequence, read N- to C-terminus: Ribulose bisphosphate carboxylase large chain (470 aa).

Substrate contacts are provided by asparagine 115 and threonine 165. The active-site Proton acceptor is lysine 167. Lysine 169 is a substrate binding site. 3 residues coordinate Mg(2+): lysine 193, aspartate 195, and glutamate 196. Lysine 193 carries the post-translational modification N6-carboxylysine. Histidine 286 functions as the Proton acceptor in the catalytic mechanism. Residues arginine 287, histidine 319, and serine 371 each contribute to the substrate site.

This sequence belongs to the RuBisCO large chain family. Type I subfamily. As to quaternary structure, heterohexadecamer of 8 large chains and 8 small chains. The cofactor is Mg(2+).

It localises to the carboxysome. It catalyses the reaction 2 (2R)-3-phosphoglycerate + 2 H(+) = D-ribulose 1,5-bisphosphate + CO2 + H2O. The enzyme catalyses D-ribulose 1,5-bisphosphate + O2 = 2-phosphoglycolate + (2R)-3-phosphoglycerate + 2 H(+). Functionally, ruBisCO catalyzes two reactions: the carboxylation of D-ribulose 1,5-bisphosphate, the primary event in carbon dioxide fixation, as well as the oxidative fragmentation of the pentose substrate in the photorespiration process. Both reactions occur simultaneously and in competition at the same active site. The polypeptide is Ribulose bisphosphate carboxylase large chain (Prochlorococcus marinus (strain NATL1A)).